Here is a 286-residue protein sequence, read N- to C-terminus: 4-diphosphocytidyl-2-C-methyl-D-erythritol kinase (286 aa).

Residue Lys-12 is part of the active site. 96-106 (PHGAGLGGGSA) lines the ATP pocket. The active site involves Asp-138.

The protein belongs to the GHMP kinase family. IspE subfamily.

It catalyses the reaction 4-CDP-2-C-methyl-D-erythritol + ATP = 4-CDP-2-C-methyl-D-erythritol 2-phosphate + ADP + H(+). Its pathway is isoprenoid biosynthesis; isopentenyl diphosphate biosynthesis via DXP pathway; isopentenyl diphosphate from 1-deoxy-D-xylulose 5-phosphate: step 3/6. Functionally, catalyzes the phosphorylation of the position 2 hydroxy group of 4-diphosphocytidyl-2C-methyl-D-erythritol. The sequence is that of 4-diphosphocytidyl-2-C-methyl-D-erythritol kinase from Nitratidesulfovibrio vulgaris (strain ATCC 29579 / DSM 644 / CCUG 34227 / NCIMB 8303 / VKM B-1760 / Hildenborough) (Desulfovibrio vulgaris).